The chain runs to 97 residues: Small nuclear ribonucleoprotein Sm D3 (97 aa).

In terms of domain architecture, Sm spans 3–75 (LCIKLLHETQ…IRFLIVPDML (73 aa)).

The protein belongs to the snRNP core protein family. Belongs to the 40S cdc5-associated complex (or cwf complex), a spliceosome sub-complex reminiscent of a late-stage spliceosome composed of the U2, U5 and U6 snRNAs and at least brr2, cdc5, cwf2/prp3, cwf3/syf1, cwf4/syf3, cwf5/ecm2, spp42/cwf6, cwf7/spf27, cwf8, cwf9, cwf10, cwf11, cwf12, prp45/cwf13, cwf14, cwf15, cwf16, cwf17, cwf18, cwf19, cwf20, cwf21, cwf22, cwf23, cwf24, cwf25, cwf26, cyp7/cwf27, cwf28, cwf29/ist3, lea1, msl1, prp5/cwf1, prp10, prp12/sap130, prp17, prp22, sap61, sap62, sap114, sap145, slu7, smb1, smd1, smd3, smf1, smg1 and syf2. Interacts with saf5; the interaction is direct.

The protein localises to the nucleus. The protein resides in the cytoplasm. It localises to the cytosol. Functionally, plays a role in pre-mRNA splicing as a core component of the spliceosomal U1, U2, U4 and U5 small nuclear ribonucleoproteins (snRNPs), the building blocks of the spliceosome. This is Small nuclear ribonucleoprotein Sm D3 (smd3) from Schizosaccharomyces pombe (strain 972 / ATCC 24843) (Fission yeast).